The primary structure comprises 154 residues: Large ribosomal subunit protein uL13 (154 aa).

The protein belongs to the universal ribosomal protein uL13 family. Part of the 50S ribosomal subunit.

Functionally, this protein is one of the early assembly proteins of the 50S ribosomal subunit, although it is not seen to bind rRNA by itself. It is important during the early stages of 50S assembly. In Rhodopseudomonas palustris (strain ATCC BAA-98 / CGA009), this protein is Large ribosomal subunit protein uL13.